The chain runs to 229 residues: Endonuclease V (229 aa).

Residues aspartate 43 and aspartate 111 each coordinate Mg(2+).

The protein belongs to the endonuclease V family. Requires Mg(2+) as cofactor.

Its subcellular location is the cytoplasm. The catalysed reaction is Endonucleolytic cleavage at apurinic or apyrimidinic sites to products with a 5'-phosphate.. Its function is as follows. DNA repair enzyme involved in the repair of deaminated bases. Selectively cleaves double-stranded DNA at the second phosphodiester bond 3' to a deoxyinosine leaving behind the intact lesion on the nicked DNA. The chain is Endonuclease V from Rippkaea orientalis (strain PCC 8801 / RF-1) (Cyanothece sp. (strain PCC 8801)).